A 571-amino-acid polypeptide reads, in one-letter code: MRTSQYLLATQKETPADAVVISHQLMLRAGMIRKLASGLYTWLPMGLRVMRKVEAVVREEMNAAGALEVLMPSIQPAELWQESGRWEQYGPELLRLKDRHDRDFCVGPTHEEVITDLARNELSSYKQLPLNMYQIQTKFRDEIRPRFGLMRGREFIMKDAYSFHADQASLQETYDRMHQAYSNIFTRLGLDFRPVQADTGSIGGSYSHEFHVLASSGEDDVIFSDSSDYAANIEKAEAIPRETVRPAPTEELRLVDTPNAKTIAELVENFGLAIEKTVKTLIVHGAEEGKLVALIVRGDHELNEIKAAKLEQVADPLVMASDTELRAAIGAGAGSLGPLNLPLECIIDRSVALMSDFGIGANIDDKHYFGVNWERDLPVPQVADLRNVVEGDPSPDGQGTLVIKRGIEVGHIFQLGTKYSEALKCQVLGENGKPVVLSMGCYGIGVSRVVAAAIEQSYDDKGIIWNDALAPFQIALVPLRYETDVVREATDKLYAELTAAGFEVLLDDRDKKTSPGIKFADMELIGIPHRIVVSDRGLADGNLEYKHRTESEAQALPLNEVLTFLQARIRR.

The protein belongs to the class-II aminoacyl-tRNA synthetase family. ProS type 1 subfamily. As to quaternary structure, homodimer.

It is found in the cytoplasm. The enzyme catalyses tRNA(Pro) + L-proline + ATP = L-prolyl-tRNA(Pro) + AMP + diphosphate. Catalyzes the attachment of proline to tRNA(Pro) in a two-step reaction: proline is first activated by ATP to form Pro-AMP and then transferred to the acceptor end of tRNA(Pro). As ProRS can inadvertently accommodate and process non-cognate amino acids such as alanine and cysteine, to avoid such errors it has two additional distinct editing activities against alanine. One activity is designated as 'pretransfer' editing and involves the tRNA(Pro)-independent hydrolysis of activated Ala-AMP. The other activity is designated 'posttransfer' editing and involves deacylation of mischarged Ala-tRNA(Pro). The misacylated Cys-tRNA(Pro) is not edited by ProRS. In Pseudomonas entomophila (strain L48), this protein is Proline--tRNA ligase.